A 410-amino-acid polypeptide reads, in one-letter code: Peptidase T (410 aa).

His78 provides a ligand contact to Zn(2+). Asp80 is a catalytic residue. A Zn(2+)-binding site is contributed by Asp140. Glu174 serves as the catalytic Proton acceptor. The Zn(2+) site is built by Glu175, Asp197, and His379.

It belongs to the peptidase M20B family. Zn(2+) serves as cofactor.

It is found in the cytoplasm. It catalyses the reaction Release of the N-terminal residue from a tripeptide.. Its function is as follows. Cleaves the N-terminal amino acid of tripeptides. The sequence is that of Peptidase T from Vibrio cholerae serotype O1 (strain ATCC 39315 / El Tor Inaba N16961).